Here is a 212-residue protein sequence, read N- to C-terminus: Putative 3-methyladenine DNA glycosylase (212 aa).

The protein belongs to the DNA glycosylase MPG family.

The chain is Putative 3-methyladenine DNA glycosylase from Psychrobacter cryohalolentis (strain ATCC BAA-1226 / DSM 17306 / VKM B-2378 / K5).